We begin with the raw amino-acid sequence, 373 residues long: Geraniol dehydrogenase (373 aa).

The Zn(2+) site is built by cysteine 47, histidine 67, cysteine 96, cysteine 99, cysteine 102, cysteine 110, and cysteine 175.

The protein belongs to the zinc-containing alcohol dehydrogenase family. In terms of assembly, homodimer. The cofactor is Zn(2+).

It carries out the reaction (2E)-geraniol + NAD(+) = (2E)-geranial + NADH + H(+). It catalyses the reaction perillyl alcohol + NAD(+) = perillyl aldehyde + NADH + H(+). It functions in the pathway terpene metabolism; monoterpene degradation. With respect to regulation, is inhibited by EDTA, N-ethylmaleimide, diethylpyrocarbonate, and 1-cyclohexyl-N-(2-morpholinoethyl)carbodiimide in vitro. Its function is as follows. Involved in the degradation of the monoterpenes beta-myrcene and limonene. During anaerobic degradation of beta-myrcene, catalyzes the NAD(+)-dependent oxidation of geraniol to geranial. Can also catalyze the oxidation of (S)-perillyl alcohol to perillyl aldehyde, and to a lesser extent, the oxidation of nerol, citronellol, cumic alcohol, and benzyl alcohol. Cannot use NADP(+) instead of NAD(+) as cosubstrate. This is Geraniol dehydrogenase from Castellaniella defragrans (strain DSM 12143 / CCUG 39792 / 65Phen) (Alcaligenes defragrans).